The primary structure comprises 668 residues: MHLRTNPSICPGRRPAWTLWMCSLFWGCIVSSVWSSSNVASSASSSSSVSQAQYEHHFHGSKHHSVPISIYRSPVSLRGGHAGATYIFGKSGGLILYTWPANDRPSTRTDRLAVGFSTTVKDGILVRIDSAPGLGDFLQLHIEQGKIGVVFNIGTVDISIKEESTPVNDGKYHVVRFTRNGGNATLQVDSWPVNEHYPTGNTDSERFQMVKQKIPFKYNRPVEEWLQEKGRQLTIFNTQAQIAIGGKDRGRLFQGQLSGLYYNGLKVLNMAAENNPNIKINGSVRLVGEVPSILGTTPTTSVPPEMSTTVMETTTTMATTTTRKNRSPPSIQTTDDIVSSAECSSDDEDFIDCEPSTGKSGGELVIPLLVEDPLDIPPIATRAPFITLPPTFRPLLTIIETTKDSLSMTSEAGLPCLSDQGSDGCDDDGLVISGYGSGETFDSNLPPTDDEDFYTTFSLVTDKSLSTSIFEGGYKAHAPKWESKDFRPNKVSETGRTTTTSLSPELIRSTASSSTGMVPKLPAGKMNNRELKPQPDIVLLPLPTAYELDSTKLKSPLITSPMFRNVPTANPTEPGIRRVPGASEVVRESSSTTGMVVGIVAAAALCILILLYAMYKYRNRDEGSYQVDETRNYISNSAQSNGTLMKEKQQSSKSGHKKQKNKDKEYYV.

Positions 1–35 are cleaved as a signal peptide; that stretch reads MHLRTNPSICPGRRPAWTLWMCSLFWGCIVSSVWS. Residues 36–593 lie on the Extracellular side of the membrane; sequence SSNVASSASS…EVVRESSSTT (558 aa). The 201-residue stretch at 84-284 folds into the Laminin G-like domain; sequence ATYIFGKSGG…NPNIKINGSV (201 aa). Residues 510–529 form a disordered region; the sequence is TASSSTGMVPKLPAGKMNNR. A helical transmembrane segment spans residues 594–614; sequence GMVVGIVAAAALCILILLYAM. Over 615 to 668 the chain is Cytoplasmic; sequence YKYRNRDEGSYQVDETRNYISNSAQSNGTLMKEKQQSSKSGHKKQKNKDKEYYV. Residues 636–668 are disordered; it reads NSAQSNGTLMKEKQQSSKSGHKKQKNKDKEYYV.

This sequence belongs to the neurexin family. Processed by alpha-secretase leading to the formation of an extracellular soluble protein as well as a C-terminal membrane-embedded fragment (CTF). Proteolysis of these CTFs by gamma-secretase releases intracellular domains (ICDs) and extracellular peptides. Brain and arteries (at protein level).

The protein localises to the membrane. Neuronal cell surface protein that may be involved in cell recognition and cell adhesion. Plays a role in angiogenesis. The chain is Neurexin-3-beta (NRXN3) from Gallus gallus (Chicken).